Consider the following 120-residue polypeptide: UPF0382 membrane protein SSP2132 (120 aa).

4 helical membrane-spanning segments follow: residues 3 to 23 (VFII…AFGA), 46 to 66 (MYHG…SINV), 69 to 89 (VGWL…ILAL), and 94 to 114 (IIGA…LMLV).

The protein belongs to the UPF0382 family.

The protein localises to the cell membrane. In Staphylococcus saprophyticus subsp. saprophyticus (strain ATCC 15305 / DSM 20229 / NCIMB 8711 / NCTC 7292 / S-41), this protein is UPF0382 membrane protein SSP2132.